The chain runs to 230 residues: Claudin-2 (230 aa).

Residues M1–Q7 are Cytoplasmic-facing. The chain crosses the membrane as a helical span at residues L8–P28. Topologically, residues N29–Q81 are extracellular. C54 and C64 are disulfide-bonded. Residues A82–M102 traverse the membrane as a helical segment. Topologically, residues R103 to R116 are cytoplasmic. The helical transmembrane segment at V117–A137 threads the bilayer. Topologically, residues W138–E162 are extracellular. Residues A163–F183 form a helical membrane-spanning segment. The Cytoplasmic segment spans residues S184–V230. The disordered stretch occupies residues T205 to V230. A Glycyl lysine isopeptide (Lys-Gly) (interchain with G-Cter in SUMO) cross-link involves residue K218. S219 and S223 each carry phosphoserine. The interactions with TJP1, TJP2 and TJP3 stretch occupies residues Y229–V230.

It belongs to the claudin family. As to quaternary structure, can form homo- and heteropolymers with other claudins to mediate paracellular barrier and channel functions of tight junctions in response to physiological stimuli. Homopolymers interact with CLDN3, but not CLDN1, homopolymers. Directly interacts with TJP1/ZO-1, TJP2/ZO-2 and TJP3/ZO-3. The disulfide bond is necessary for pore formation, but is not required for correct protein trafficking. As to expression, expressed in the kidney, liver and intestine, with higher levels in the ileum than in the jejunum. Low levels in the brain. Expressed in colonic epithelium (at protein level). Expressed in the perivenous regions, bile ducts, and gallbladder epithelium (at protein level).

Its subcellular location is the cell junction. The protein resides in the tight junction. It is found in the cell membrane. The enzyme catalyses Na(+)(in) = Na(+)(out). The catalysed reaction is K(+)(in) = K(+)(out). It catalyses the reaction Rb(+)(in) = Rb(+)(out). It carries out the reaction Li(+)(in) = Li(+)(out). The enzyme catalyses Cs(+)(in) = Cs(+)(out). The catalysed reaction is Ca(2+)(in) = Ca(2+)(out). It catalyses the reaction methylamine(out) = methylamine(in). It carries out the reaction choline(out) = choline(in). The enzyme catalyses H2O(in) = H2O(out). With respect to regulation, the channel permeability is down-regulated at acidic pH. In terms of biological role, forms paracellular channels: polymerizes in tight junction strands with cation- and water-selective channels through the strands, conveying epithelial permeability in a process known as paracellular tight junction permeability. In intestinal epithelium, allows for sodium and water fluxes from the peritoneal side to the lumen of the intestine to regulate nutrient absorption and clear enteric pathogens as part of mucosal immune response. In kidney, allows passive sodium and calcium reabsorption across proximal tubules from the lumen back to the bloodstream. In the hepatobiliary tract, allows paracellular water and cation fluxes in the hepatic perivenous areas and biliary epithelium to generate bile flow and maintain osmotic gradients. In Mus musculus (Mouse), this protein is Claudin-2.